An 822-amino-acid chain; its full sequence is Sushi domain-containing protein 2 (822 aa).

An N-terminal signal peptide occupies residues 1-27 (MKPALLPWALLLLATALGPGPGPTADA). One can recognise an SMB domain in the interval 28–66 (QESCSMRCGALDGPCSCHPTCSGLGTCCLDFRDFCLEIL). Residues 28 to 785 (QESCSMRCGA…PKCQPGRSYA (758 aa)) lie on the Extracellular side of the membrane. 7 disulfides stabilise this stretch: Cys31–Cys35, Cys31–Cys44, Cys35–Cys62, Cys42–Cys44, Cys42–Cys55, Cys48–Cys54, and Cys55–Cys62. N-linked (GlcNAc...) asparagine glycosylation is found at Asn162 and Asn177. The region spanning 285–433 (PVAWARTQCQ…PDCPRYMQRR (149 aa)) is the AMOP domain. A VWFD domain is found at 445 to 639 (RLASAFGDPH…NWTVHNASSL (195 aa)). The N-linked (GlcNAc...) asparagine glycan is linked to Asn522. One can recognise a Sushi domain in the interval 723 to 780 (VSCGWLAPPPNGQKEGNRYLAGSTIYFHCDNGYSLAGAETSTCQADGTWSSPTPKCQP). 2 cysteine pairs are disulfide-bonded: Cys725-Cys765 and Cys751-Cys778. The chain crosses the membrane as a helical span at residues 786-806 (VLLGIIFGGLAVVAAVALVYV). Over 807-822 (LLRRRKGNTHVWGAQP) the chain is Cytoplasmic.

Interacts with LGALS1; leads to an increased amount of LGALS1 on the cell surface. Interacts with GPR15LG; the interaction is direct. Highly expressed in breast cancer, but shows a restricted expression pattern in normal tissues such as adipose, adrenal gland, kidney, lung, mammary gland, placenta, thyroid, trachea, and uterus. Also expressed in colon; down-regulated in colon cancer tissues.

Its subcellular location is the cell membrane. Functionally, may be a cytokine receptor for GPR15LG. May be a tumor suppressor; together with GPR15LG has a growth inhibitory effect on colon cancer cells which includes G1 cell cycle arrest. May play a role in breast tumorigenesis. The polypeptide is Sushi domain-containing protein 2 (SUSD2) (Homo sapiens (Human)).